Here is a 153-residue protein sequence, read N- to C-terminus: MVVKAVCVINGDAKGTVFFEQEDNGAPVKVTGEVTGLGKGLHGFHVHEFGDNTNGCMSSGPHFNPHSKEHGAPGDENRHLGDLGNIEASGSGPTAVNITDSKITLVGANSIIGRTVVVHADPDDLGKGGHELSKTTGNAGARIGCGVIGIAKI.

Residues H45, H47, and H62 each coordinate Cu cation. Residues C56 and C145 are joined by a disulfide bond. Residues H62, H70, H79, and D82 each contribute to the Zn(2+) site. Cu cation is bound at residue H119.

The protein belongs to the Cu-Zn superoxide dismutase family. Homodimer. The cofactor is Cu cation. Zn(2+) is required as a cofactor.

The protein localises to the cytoplasm. The enzyme catalyses 2 superoxide + 2 H(+) = H2O2 + O2. Destroys radicals which are normally produced within the cells and which are toxic to biological systems. The sequence is that of Superoxide dismutase [Cu-Zn] from Drosophila willistoni (Fruit fly).